We begin with the raw amino-acid sequence, 282 residues long: Glycine/sarcosine N-methyltransferase (282 aa).

The segment covering 1–23 has biased composition (polar residues); it reads MTSTQNHPLQTQDDQQRFGQSPE. A disordered region spans residues 1–27; the sequence is MTSTQNHPLQTQDDQQRFGQSPESVRE. Residues Y35, W43, R52, A76, D97, 123 to 124, and L141 each bind S-adenosyl-L-methionine; that span reads DW. 3 residues coordinate substrate: N143, R176, and Y217.

The protein belongs to the class I-like SAM-binding methyltransferase superfamily. Glycine N-methyltransferase family. Monomer.

The enzyme catalyses glycine + 2 S-adenosyl-L-methionine = N,N-dimethylglycine + 2 S-adenosyl-L-homocysteine + 2 H(+). It catalyses the reaction glycine + S-adenosyl-L-methionine = sarcosine + S-adenosyl-L-homocysteine + H(+). The catalysed reaction is sarcosine + S-adenosyl-L-methionine = N,N-dimethylglycine + S-adenosyl-L-homocysteine + H(+). It functions in the pathway amine and polyamine biosynthesis; betaine biosynthesis via glycine pathway; betaine from glycine: step 1/3. It participates in amine and polyamine biosynthesis; betaine biosynthesis via glycine pathway; betaine from glycine: step 2/3. Its function is as follows. Catalyzes the methylation of glycine and sarcosine to sarcosine and dimethylglycine, respectively, with S-adenosylmethionine (AdoMet) acting as the methyl donor. It has strict specificity for glycine and sarcosine as the methyl group acceptors. The sequence is that of Glycine/sarcosine N-methyltransferase from Parasynechococcus marenigrum (strain WH8102).